We begin with the raw amino-acid sequence, 375 residues long: Citrate synthase (375 aa).

Active-site residues include His-266 and Asp-317.

It belongs to the citrate synthase family. Homohexamer.

The catalysed reaction is oxaloacetate + acetyl-CoA + H2O = citrate + CoA + H(+). It functions in the pathway carbohydrate metabolism; tricarboxylic acid cycle; isocitrate from oxaloacetate: step 1/2. Allosterically inhibited by NADH. The protein is Citrate synthase (gltA) of Mycolicibacterium smegmatis (Mycobacterium smegmatis).